The chain runs to 692 residues: Phenoloxidase subunit 2 (692 aa).

The propeptide occupies 1-97; that stretch reads MTDRVKSLQL…PRHQEMATEV (97 aa). Residues His213, His217, and His243 each contribute to the Cu cation site. 3 N-linked (GlcNAc...) asparagine glycosylation sites follow: Asn256, Asn295, and Asn309. Glu351 acts as the Proton acceptor in catalysis. 3 residues coordinate Cu cation: His366, His370, and His406. A glycan (N-linked (GlcNAc...) asparagine) is linked at Asn494. 2 cysteine pairs are disulfide-bonded: Cys583/Cys628 and Cys585/Cys635.

Belongs to the tyrosinase family. As to quaternary structure, heterodimer. Cu(2+) serves as cofactor.

It localises to the secreted. It carries out the reaction L-tyrosine + O2 = L-dopaquinone + H2O. The enzyme catalyses 2 L-dopa + O2 = 2 L-dopaquinone + 2 H2O. In terms of biological role, copper-containing oxidase that functions in the formation of pigments such as melanins and other polyphenolic compounds. Catalyzes the rate-limiting conversions of tyrosine to DOPA, DOPA to DOPA-quinone and possibly 5,6 dihydroxyindole to indole-5'6 quinone. Binds to the surface of hemocytes and is involved in hemocyte melanization. Binds the A.niger cell wall component alpha-1,3-glucan, a fungal pathogen-associated molecular pattern (PAMP) that activates the host immune response. In Galleria mellonella (Greater wax moth), this protein is Phenoloxidase subunit 2.